Consider the following 172-residue polypeptide: SsrA-binding protein (172 aa).

This sequence belongs to the SmpB family.

The protein resides in the cytoplasm. In terms of biological role, required for rescue of stalled ribosomes mediated by trans-translation. Binds to transfer-messenger RNA (tmRNA), required for stable association of tmRNA with ribosomes. tmRNA and SmpB together mimic tRNA shape, replacing the anticodon stem-loop with SmpB. tmRNA is encoded by the ssrA gene; the 2 termini fold to resemble tRNA(Ala) and it encodes a 'tag peptide', a short internal open reading frame. During trans-translation Ala-aminoacylated tmRNA acts like a tRNA, entering the A-site of stalled ribosomes, displacing the stalled mRNA. The ribosome then switches to translate the ORF on the tmRNA; the nascent peptide is terminated with the 'tag peptide' encoded by the tmRNA and targeted for degradation. The ribosome is freed to recommence translation, which seems to be the essential function of trans-translation. In Dehalococcoides mccartyi (strain ATCC BAA-2100 / JCM 16839 / KCTC 5957 / BAV1), this protein is SsrA-binding protein.